A 515-amino-acid polypeptide reads, in one-letter code: 1-pyrroline-5-carboxylate dehydrogenase (515 aa).

Active-site residues include glutamate 286 and cysteine 320.

It belongs to the aldehyde dehydrogenase family. RocA subfamily.

The enzyme catalyses L-glutamate 5-semialdehyde + NAD(+) + H2O = L-glutamate + NADH + 2 H(+). It participates in amino-acid degradation; L-proline degradation into L-glutamate; L-glutamate from L-proline: step 2/2. The chain is 1-pyrroline-5-carboxylate dehydrogenase from Bacillus cereus (strain ATCC 10987 / NRS 248).